Reading from the N-terminus, the 273-residue chain is Dermonecrotic toxin LhSicTox-alphaIA2bi (273 aa).

Positions 25 and 27 each coordinate Mg(2+). H41 serves as the catalytic Nucleophile. Disulfide bonds link C45–C51 and C47–C190. D85 contributes to the Mg(2+) binding site.

This sequence belongs to the arthropod phospholipase D family. Class II subfamily. Requires Mg(2+) as cofactor. In terms of tissue distribution, expressed by the venom gland.

The protein resides in the secreted. It carries out the reaction an N-(acyl)-sphingosylphosphocholine = an N-(acyl)-sphingosyl-1,3-cyclic phosphate + choline. It catalyses the reaction an N-(acyl)-sphingosylphosphoethanolamine = an N-(acyl)-sphingosyl-1,3-cyclic phosphate + ethanolamine. The catalysed reaction is a 1-acyl-sn-glycero-3-phosphocholine = a 1-acyl-sn-glycero-2,3-cyclic phosphate + choline. The enzyme catalyses a 1-acyl-sn-glycero-3-phosphoethanolamine = a 1-acyl-sn-glycero-2,3-cyclic phosphate + ethanolamine. Dermonecrotic toxins cleave the phosphodiester linkage between the phosphate and headgroup of certain phospholipids (sphingolipid and lysolipid substrates), forming an alcohol (often choline) and a cyclic phosphate. This toxin acts on sphingomyelin (SM). It may also act on ceramide phosphoethanolamine (CPE), lysophosphatidylcholine (LPC) and lysophosphatidylethanolamine (LPE), but not on lysophosphatidylserine (LPS), and lysophosphatidylglycerol (LPG). It acts by transphosphatidylation, releasing exclusively cyclic phosphate products as second products. Induces dermonecrosis, hemolysis, increased vascular permeability, edema, inflammatory response, and platelet aggregation. This chain is Dermonecrotic toxin LhSicTox-alphaIA2bi, found in Loxosceles hirsuta (Recluse spider).